We begin with the raw amino-acid sequence, 141 residues long: Nucleoside diphosphate kinase (141 aa).

K11, F59, R87, T93, R104, and N114 together coordinate ATP. The active-site Pros-phosphohistidine intermediate is the H117.

Belongs to the NDK family. Homotetramer. Requires Mg(2+) as cofactor.

The protein localises to the cytoplasm. It carries out the reaction a 2'-deoxyribonucleoside 5'-diphosphate + ATP = a 2'-deoxyribonucleoside 5'-triphosphate + ADP. The catalysed reaction is a ribonucleoside 5'-diphosphate + ATP = a ribonucleoside 5'-triphosphate + ADP. Its function is as follows. Major role in the synthesis of nucleoside triphosphates other than ATP. The ATP gamma phosphate is transferred to the NDP beta phosphate via a ping-pong mechanism, using a phosphorylated active-site intermediate. The polypeptide is Nucleoside diphosphate kinase (Pseudomonas entomophila (strain L48)).